The primary structure comprises 116 residues: Dolichyl-diphosphooligosaccharide--protein glycosyltransferase subunit DAD1 (116 aa).

Over 1-32 the chain is Cytoplasmic; sequence MAKSSATKDAQALFHSLRSAYAATPTNLKIID. Residues 33–53 form a helical membrane-spanning segment; that stretch reads LYVIFAISTALIQVVYMAIVG. Over 54-56 the chain is Lumenal; it reads SFP. Residues 57-77 traverse the membrane as a helical segment; the sequence is FNSFLSGVLSCIGTAVLAVCL. Topologically, residues 78–95 are cytoplasmic; the sequence is RIQVNKENKEFKDLPPER. A helical membrane pass occupies residues 96–116; the sequence is AFADFVLCNLVLHLVIMNFLG.

Belongs to the DAD/OST2 family. As to quaternary structure, component of the oligosaccharyltransferase (OST) complex.

The protein resides in the endoplasmic reticulum membrane. It functions in the pathway protein modification; protein glycosylation. In terms of biological role, subunit of the oligosaccharyl transferase (OST) complex that catalyzes the initial transfer of a defined glycan (Glc(3)Man(9)GlcNAc(2) in eukaryotes) from the lipid carrier dolichol-pyrophosphate to an asparagine residue within an Asn-X-Ser/Thr consensus motif in nascent polypeptide chains, the first step in protein N-glycosylation. N-glycosylation occurs cotranslationally and the complex associates with the Sec61 complex at the channel-forming translocon complex that mediates protein translocation across the endoplasmic reticulum (ER). All subunits are required for a maximal enzyme activity. The polypeptide is Dolichyl-diphosphooligosaccharide--protein glycosyltransferase subunit DAD1 (DAD1) (Solanum lycopersicum (Tomato)).